The following is a 358-amino-acid chain: Sesquiterpene synthase Agr3 (358 aa).

4 residues coordinate Mg(2+): D99, N246, S250, and E254. The DDXXD motif signature appears at 99–103 (DNISD). (2E,6E)-farnesyl diphosphate-binding residues include R334 and Y335.

This sequence belongs to the terpene synthase family. Requires Mg(2+) as cofactor.

It catalyses the reaction (2E,6E)-farnesyl diphosphate = alpha-muurolene + diphosphate. It carries out the reaction (2E,6E)-farnesyl diphosphate = gamma-muurolene + diphosphate. The catalysed reaction is (2E,6E)-farnesyl diphosphate = delta-cadinene + diphosphate. In terms of biological role, terpene cyclase that catalyzes the cyclization of farnesyl diphosphate (FPP) to various sesquiterpenes, including alpha-muurolene, gamma-muurolene, germacrene, delta-cadinene, delta-cadinol and cubenol. This is Sesquiterpene synthase Agr3 from Cyclocybe aegerita (Black poplar mushroom).